A 502-amino-acid chain; its full sequence is Mannitol 2-dehydrogenase (502 aa).

37–48 (IVHVGVGGFHRA) is an NAD(+) binding site.

It belongs to the mannitol dehydrogenase family. Monomer.

The catalysed reaction is D-mannitol + NAD(+) = D-fructose + NADH + H(+). In terms of biological role, catalyzes the NAD(H)-dependent interconversion of D-fructose and D-mannitol in the mannitol metabolic pathway. This is Mannitol 2-dehydrogenase from Aspergillus oryzae (strain ATCC 42149 / RIB 40) (Yellow koji mold).